We begin with the raw amino-acid sequence, 1172 residues long: DNA-directed RNA polymerase subunit beta (1172 aa).

The protein belongs to the RNA polymerase beta chain family. In terms of assembly, the RNAP catalytic core consists of 2 alpha, 1 beta, 1 beta' and 1 omega subunit. When a sigma factor is associated with the core the holoenzyme is formed, which can initiate transcription.

The catalysed reaction is RNA(n) + a ribonucleoside 5'-triphosphate = RNA(n+1) + diphosphate. Its function is as follows. DNA-dependent RNA polymerase catalyzes the transcription of DNA into RNA using the four ribonucleoside triphosphates as substrates. In Mycobacterium sp. (strain KMS), this protein is DNA-directed RNA polymerase subunit beta.